The sequence spans 303 residues: Signal recognition particle receptor FtsY (303 aa).

GTP-binding positions include 108 to 115, 190 to 194, and 254 to 257; these read GVNGVGKT, DTAGR, and TKLD.

It belongs to the GTP-binding SRP family. FtsY subfamily. In terms of assembly, part of the signal recognition particle protein translocation system, which is composed of SRP and FtsY. SRP is a ribonucleoprotein composed of Ffh and a 4.5S RNA molecule.

The protein resides in the cell inner membrane. Its subcellular location is the cytoplasm. The catalysed reaction is GTP + H2O = GDP + phosphate + H(+). Involved in targeting and insertion of nascent membrane proteins into the cytoplasmic membrane. Acts as a receptor for the complex formed by the signal recognition particle (SRP) and the ribosome-nascent chain (RNC). Interaction with SRP-RNC leads to the transfer of the RNC complex to the Sec translocase for insertion into the membrane, the hydrolysis of GTP by both Ffh and FtsY, and the dissociation of the SRP-FtsY complex into the individual components. This is Signal recognition particle receptor FtsY from Rickettsia typhi (strain ATCC VR-144 / Wilmington).